Here is a 186-residue protein sequence, read N- to C-terminus: Lipoprotein signal peptidase (186 aa).

4 helical membrane passes run 8 to 28 (FFSV…FLDL), 44 to 64 (IPVL…FVFG), 66 to 86 (FQDN…FLIF), and 97 to 117 (AWGW…KFFV). Residues Asp-142 and Asp-164 contribute to the active site. Residues 157–177 (WPAFNVADSCVSIGIVILLFT) traverse the membrane as a helical segment.

It belongs to the peptidase A8 family.

Its subcellular location is the cell inner membrane. It catalyses the reaction Release of signal peptides from bacterial membrane prolipoproteins. Hydrolyzes -Xaa-Yaa-Zaa-|-(S,diacylglyceryl)Cys-, in which Xaa is hydrophobic (preferably Leu), and Yaa (Ala or Ser) and Zaa (Gly or Ala) have small, neutral side chains.. It functions in the pathway protein modification; lipoprotein biosynthesis (signal peptide cleavage). Functionally, this protein specifically catalyzes the removal of signal peptides from prolipoproteins. This chain is Lipoprotein signal peptidase, found in Leptospira biflexa serovar Patoc (strain Patoc 1 / ATCC 23582 / Paris).